We begin with the raw amino-acid sequence, 268 residues long: Microtubule-associated protein RP/EB family member 1 (268 aa).

Alanine 2 is subject to N-acetylalanine. Positions 14-116 (NLSRHDMLAW…FVQWFKKFFD (103 aa)) constitute a Calponin-homology (CH) domain. An N6-crotonyllysine modification is found at lysine 66. Tyrosine 124 carries the post-translational modification Phosphotyrosine. An interaction with MTUS2/TIP150 region spans residues 124 to 268 (YDPVAARQGQ…GGPQEEQEEY (145 aa)). Positions 146–187 (LNKPKKPLTSSSAAPQRPISTQRTAAAPKAGPGVVRKNPGVG) are disordered. Residues 153-169 (LTSSSAAPQRPISTQRT) are compositionally biased toward polar residues. Phosphoserine occurs at positions 155 and 165. The EB1 C-terminal domain occupies 185-255 (GVGNGDDEAA…LYATDEGFVI (71 aa)). Positions 185-268 (GVGNGDDEAA…GGPQEEQEEY (84 aa)) are interaction with CDK5RAP2. The tract at residues 206 to 211 (TVEDLE) is interaction with APC. A DCTN1-binding region spans residues 208–268 (EDLEKERDFY…GGPQEEQEEY (61 aa)). Lysine 220 carries the post-translational modification N6-acetyllysine. Positions 220 to 242 (KLRNIELICQENEGENDPVLQRI) are APC-binding. Residues 232 to 255 (EGENDPVLQRIVDILYATDEGFVI) are interaction with SKA1.

It belongs to the MAPRE family. As to quaternary structure, homodimer. Heterodimer with MAPRE3. Interacts with DCTN1, DCTN2, TERF1 and dynein intermediate chain. Interaction with DIAPH1 and DIAPH2. Interacts (via C-terminal residues 206-211) with APC (via C-terminal residues 2674-2843); the interaction inhibits association with and bundling of F-actin. Interacts with CLASP2, DST, KIF2C and STIM1; probably required for their targeting to the growing microtubule plus ends. Interacts with MTUS2; interaction is direct and probably targets MTUS2 to microtubules. Interacts (via C-terminus) with SKA1 (via SXIP motif); the interaction is direct and stabilizes the kinetochore-microtubule attachment of the SKA1 complex. Interacts with APC2. Interacts with CLASP1. Interacts with CDK5RAP2. Interacts with MACF1. Interacts with RABL2/RABL2A; binds preferentially to GTP-bound RABL2. Interacts with KCNAB2. Interacts (via C-terminus) with CLIP1. Interacts with SLAIN2 and SLAIN1. Interacts with KIF18B; this interaction is required for efficient accumulation of KIF18B at microtubule plus ends. Interacts with MISP. Interacts with KNSTRN. Interacts with NCKAP5L. Interacts with CAMSAP2. Interacts with PDE4DIP isoform 13/MMG8/SMYLE; this interaction is required for its recruitment to the Golgi apparatus. Forms a pericentrosomal complex with AKAP9, CDK5RAP2 and PDE4DIP isoform 13/MMG8/SMYLE; within this complex, MAPRE1 binding to CDK5RAP2 may be mediated by PDE4DIP. Interacts with AKNA. Interacts with GAS2L1, GAS2L2, and GAS2L3. Interacts with RARRES1 and AGBL2. In terms of processing, acetylation at Lys-220 by KAT2B/PCAF promotes dynamic kinetochore-microtubule interactions in early mitosis. Crotonylated by KAT5 during mitosis, promoting astral microtubule plasticity and dynamic connection between astral microtubules and the cortex during mitotic chromosome segregation, thereby ensuring accurate spindle positioning in mitosis. Decrotonylated by HDAC3. In terms of tissue distribution, ubiquitously expressed.

The protein localises to the cytoplasm. It is found in the cytoskeleton. Its subcellular location is the microtubule organizing center. It localises to the centrosome. The protein resides in the golgi apparatus. The protein localises to the spindle. It is found in the spindle pole. Functionally, plus-end tracking protein (+TIP) that binds to the plus-end of microtubules and regulates the dynamics of the microtubule cytoskeleton. Recruits other +TIP proteins to microtubules by binding to a conserved Ser-X-Leu-Pro (SXLP) motif in their polypeptide chains. Promotes cytoplasmic microtubule nucleation and elongation. Involved in mitotic spindle positioning by stabilizing microtubules and promoting dynamic connection between astral microtubules and the cortex during mitotic chromosome segregation. Assists chromosome alignment in metaphase by recruiting the SKA complex to the spindle and stabilizing its interactions with microtubule bundles (K-fibers). Also acts as a regulator of minus-end microtubule organization: interacts with the complex formed by AKAP9 and PDE4DIP, leading to recruit CAMSAP2 to the Golgi apparatus, thereby tethering non-centrosomal minus-end microtubules to the Golgi, an important step for polarized cell movement. Promotes elongation of CAMSAP2-decorated microtubule stretches on the minus-end of microtubules. Acts as a regulator of autophagosome transport via interaction with CAMSAP2. Functions downstream of Rho GTPases and DIAPH1 in stable microtubule formation. May play a role in cell migration. The polypeptide is Microtubule-associated protein RP/EB family member 1 (Homo sapiens (Human)).